Consider the following 581-residue polypeptide: Arginine--tRNA ligase (581 aa).

The short motif at 126–136 (PNLAKEMHVGH) is the 'HIGH' region element.

It belongs to the class-I aminoacyl-tRNA synthetase family. In terms of assembly, monomer.

The protein resides in the cytoplasm. It carries out the reaction tRNA(Arg) + L-arginine + ATP = L-arginyl-tRNA(Arg) + AMP + diphosphate. This chain is Arginine--tRNA ligase, found in Shewanella amazonensis (strain ATCC BAA-1098 / SB2B).